The sequence spans 692 residues: ABC transporter F family member 5 (692 aa).

Positions 64-95 are disordered; sequence EIESLFSKQPSQQDSDRKRNGKSSKNGASGIS. Positions 86-95 are enriched in polar residues; that stretch reads SSKNGASGIS. ABC transporter domains follow at residues 98 to 356 and 425 to 640; these read VKLE…ETQN and VNVK…TKEL. ATP-binding positions include 130–137 and 457–464; these read GVNGAGKT and GPNGCGKS. Positions 644-692 are disordered; that stretch reads AELEEKAPKVKAKSKMSKAEKEARKKQKMQAFQQAKQKSKASKNSKRWN. Positions 680-692 are enriched in basic residues; it reads QKSKASKNSKRWN.

This sequence belongs to the ABC transporter superfamily. ABCF family. EF3 (TC 3.A.1.121) subfamily.

This is ABC transporter F family member 5 (ABCF5) from Arabidopsis thaliana (Mouse-ear cress).